A 232-amino-acid chain; its full sequence is Large ribosomal subunit protein uL1 (232 aa).

It belongs to the universal ribosomal protein uL1 family. Part of the 50S ribosomal subunit.

Functionally, binds directly to 23S rRNA. The L1 stalk is quite mobile in the ribosome, and is involved in E site tRNA release. Its function is as follows. Protein L1 is also a translational repressor protein, it controls the translation of the L11 operon by binding to its mRNA. This chain is Large ribosomal subunit protein uL1, found in Ruegeria pomeroyi (strain ATCC 700808 / DSM 15171 / DSS-3) (Silicibacter pomeroyi).